The chain runs to 603 residues: NADH-ubiquinone oxidoreductase chain 5 (603 aa).

15 helical membrane-spanning segments follow: residues 4-24, 35-55, 84-104, 121-141, 177-197, 213-233, 241-261, 273-293, 301-320, 325-347, 366-386, 413-433, 457-477, 480-500, and 583-603; these read ISTL…TTLL, ITKT…LLFV, FFSL…MEFS, LLLF…LQLF, IGDM…NSWE, LLGL…HPWL, TPVS…FTLI, VQTS…ICAL, IIAL…IGIN, AFTH…GSII, MPIT…MPFL, LIAV…ALLG, LILG…PHTT, MTMP…GFTV, and LMKL…LIAL.

It belongs to the complex I subunit 5 family. In terms of assembly, core subunit of respiratory chain NADH dehydrogenase (Complex I) which is composed of 45 different subunits.

Its subcellular location is the mitochondrion inner membrane. The catalysed reaction is a ubiquinone + NADH + 5 H(+)(in) = a ubiquinol + NAD(+) + 4 H(+)(out). Functionally, core subunit of the mitochondrial membrane respiratory chain NADH dehydrogenase (Complex I) which catalyzes electron transfer from NADH through the respiratory chain, using ubiquinone as an electron acceptor. Essential for the catalytic activity and assembly of complex I. The protein is NADH-ubiquinone oxidoreductase chain 5 (MT-ND5) of Mammuthus primigenius (Siberian woolly mammoth).